Consider the following 524-residue polypeptide: GMP synthase [glutamine-hydrolyzing] (524 aa).

The Glutamine amidotransferase type-1 domain occupies 9–207; it reads RILILDFSSQ…VIHICQCIPN (199 aa). The active-site Nucleophile is the cysteine 86. Residues histidine 181 and glutamate 183 contribute to the active site. Residues 208–399 form the GMPS ATP-PPase domain; the sequence is WTTKHIIEDS…LGLPADLIYR (192 aa). Residue 235–241 participates in ATP binding; the sequence is SGGVDSA.

Homodimer.

The catalysed reaction is XMP + L-glutamine + ATP + H2O = GMP + L-glutamate + AMP + diphosphate + 2 H(+). It functions in the pathway purine metabolism; GMP biosynthesis; GMP from XMP (L-Gln route): step 1/1. In terms of biological role, catalyzes the synthesis of GMP from XMP. This Coxiella burnetii (strain Dugway 5J108-111) protein is GMP synthase [glutamine-hydrolyzing].